Here is a 623-residue protein sequence, read N- to C-terminus: Chaperone protein HtpG (623 aa).

The segment at 1–336 (MVSKQQTMGF…ASDLPLNISR (336 aa)) is a; substrate-binding. The interval 337–550 (EILQDNKQVE…EQDMGLEMQR (214 aa)) is b. The segment at 551–623 (ILQAAGQQVP…NRVNRLLVSS (73 aa)) is c.

Belongs to the heat shock protein 90 family. As to quaternary structure, homodimer.

It is found in the cytoplasm. In terms of biological role, molecular chaperone. Has ATPase activity. This Legionella pneumophila (strain Paris) protein is Chaperone protein HtpG.